The primary structure comprises 108 residues: C-C motif chemokine 19 (108 aa).

Positions 1–25 (MAPRVTPLLAFSLLVLWTFPAPTLG) are cleaved as a signal peptide. Disulfide bonds link Cys-33-Cys-59 and Cys-34-Cys-75. Asn-100 is a glycosylation site (N-linked (GlcNAc...) asparagine).

This sequence belongs to the intercrine beta (chemokine CC) family. As to quaternary structure, interacts with TNFAIP6 (via Link domain). As to expression, highly expressed by dendritic cells in mesenteric and peripheral lymph nodes. Significant expression in spleen (T cell zone or periarteriolar lymphatic sheath) and Peyer patches. Low expression in thymus.

Its subcellular location is the secreted. Strongly chemotactic for naive (L-selectinhi) CD4 T-cells and for CD8 T-cells and weakly attractive for resting B-cells and memory (L-selectinlo) CD4 T-cells. May play a role in promoting encounters between recirculating T-cells and dendritic cells and in the migration of activated B-cells into the T-zone of secondary lymphoid tissues. Binds to chemokine receptor CCR7. Binds to atypical chemokine receptor ACKR4 and mediates the recruitment of beta-arrestin (ARRB1/2) to ACKR4. The polypeptide is C-C motif chemokine 19 (Ccl19) (Mus musculus (Mouse)).